The chain runs to 948 residues: ATPase 8, plasma membrane-type (948 aa).

Over 1–64 (MATEFSWDEI…EKSENKFLKF (64 aa)) the chain is Cytoplasmic. A helical membrane pass occupies residues 65-84 (LGFMWNPLSWVMESAAIMAI). Residues 85–96 (VLANGGGKAPDW) are Extracellular-facing. A helical membrane pass occupies residues 97–117 (QDFIGIMVLLIINSTISFIEE). Residues 118-246 (NNAGNAAAAL…GHFQKVLTSI (129 aa)) lie on the Cytoplasmic side of the membrane. The chain crosses the membrane as a helical span at residues 247 to 267 (GNFCICSIGLGMLIEILIMYP). Residues 268–276 (IQHRTYRDG) lie on the Extracellular side of the membrane. Residues 277–294 (IDNLLVLLIGGIPIAMPT) form a helical membrane-spanning segment. Topologically, residues 295–646 (VLSVTMAIGS…TSRAIFQRMK (352 aa)) are cytoplasmic. Catalysis depends on aspartate 332, which acts as the 4-aspartylphosphate intermediate. Mg(2+) contacts are provided by aspartate 591 and aspartate 595. A helical membrane pass occupies residues 647–668 (NYTIYAVSITIRIVLGFMLVAL). Residues 669–673 (IWRFD) lie on the Extracellular side of the membrane. Residues 674-696 (FAPFMVLIIAILNDGTIMTISKD) traverse the membrane as a helical segment. The Cytoplasmic segment spans residues 697–712 (RVKPSPVPDSWKLNEI). Residues 713-733 (FATGVVLGTYMALTTVLFFWL) traverse the membrane as a helical segment. The Extracellular segment spans residues 734–754 (AHDTDFFSKTFGVRSIQGNEE). Residues 755-775 (ELMAALYLQVSIISQALIFVT) traverse the membrane as a helical segment. Residues 776–787 (RSRSWSFVERPG) are Cytoplasmic-facing. A helical transmembrane segment spans residues 788 to 808 (FLLLIAFVIAQLVATLIAVYA). The Extracellular segment spans residues 809–816 (NWGFARIV). Residues 817 to 837 (GCGWGWAGGIWVYSIITYIPL) form a helical membrane-spanning segment. Topologically, residues 838 to 948 (DILKFIIRYA…IDTIQQHYTV (111 aa)) are cytoplasmic. Threonine 884 bears the Phosphothreonine mark. The residue at position 930 (serine 930) is a Phosphoserine. Residues 946–948 (YTV) form an interaction with 14-3-3 proteins region. Threonine 947 carries the phosphothreonine modification.

The protein belongs to the cation transport ATPase (P-type) (TC 3.A.3) family. Type IIIA subfamily. In terms of assembly, binds to 14-3-3 proteins. The binding is induced by phosphorylation of Thr-947. Binding to 14-3-3 proteins activates the H(+)-ATPase. Expressed in guard cells, roots and leaves, and barely in mesophyll cells.

The protein resides in the membrane. The enzyme catalyses ATP + H2O + H(+)(in) = ADP + phosphate + 2 H(+)(out). In terms of biological role, the plasma membrane H(+) ATPase of plants and fungi generates a proton gradient that drives the active transport of nutrients by H(+)-symport. The resulting external acidification and/or internal alkinization may mediate growth responses. This is ATPase 8, plasma membrane-type (AHA8) from Arabidopsis thaliana (Mouse-ear cress).